The sequence spans 515 residues: 2-isopropylmalate synthase (515 aa).

Residues 5-267 (VIIFDTTLRD…HTSLKNDEIH (263 aa)) enclose the Pyruvate carboxyltransferase domain. D14, H202, H204, and N238 together coordinate Mn(2+). The interval 392 to 515 (KLNYLSVQSG…EIKQNKITTV (124 aa)) is regulatory domain.

This sequence belongs to the alpha-IPM synthase/homocitrate synthase family. LeuA type 1 subfamily. In terms of assembly, homodimer. The cofactor is Mn(2+).

It localises to the cytoplasm. It catalyses the reaction 3-methyl-2-oxobutanoate + acetyl-CoA + H2O = (2S)-2-isopropylmalate + CoA + H(+). It participates in amino-acid biosynthesis; L-leucine biosynthesis; L-leucine from 3-methyl-2-oxobutanoate: step 1/4. Catalyzes the condensation of the acetyl group of acetyl-CoA with 3-methyl-2-oxobutanoate (2-ketoisovalerate) to form 3-carboxy-3-hydroxy-4-methylpentanoate (2-isopropylmalate). The polypeptide is 2-isopropylmalate synthase (Aliivibrio salmonicida (strain LFI1238) (Vibrio salmonicida (strain LFI1238))).